Reading from the N-terminus, the 364-residue chain is Ferrochelatase (364 aa).

Fe cation is bound by residues His210 and Glu291.

This sequence belongs to the ferrochelatase family.

It localises to the cytoplasm. The enzyme catalyses heme b + 2 H(+) = protoporphyrin IX + Fe(2+). It participates in porphyrin-containing compound metabolism; protoheme biosynthesis; protoheme from protoporphyrin-IX: step 1/1. In terms of biological role, catalyzes the ferrous insertion into protoporphyrin IX. In Idiomarina loihiensis (strain ATCC BAA-735 / DSM 15497 / L2-TR), this protein is Ferrochelatase.